Reading from the N-terminus, the 223-residue chain is Probable transaldolase (223 aa).

The active-site Schiff-base intermediate with substrate is Lys-86.

Belongs to the transaldolase family. Type 3B subfamily.

The protein localises to the cytoplasm. The enzyme catalyses D-sedoheptulose 7-phosphate + D-glyceraldehyde 3-phosphate = D-erythrose 4-phosphate + beta-D-fructose 6-phosphate. The protein operates within carbohydrate degradation; pentose phosphate pathway; D-glyceraldehyde 3-phosphate and beta-D-fructose 6-phosphate from D-ribose 5-phosphate and D-xylulose 5-phosphate (non-oxidative stage): step 2/3. Transaldolase is important for the balance of metabolites in the pentose-phosphate pathway. The sequence is that of Probable transaldolase (tal) from Thermoplasma acidophilum (strain ATCC 25905 / DSM 1728 / JCM 9062 / NBRC 15155 / AMRC-C165).